We begin with the raw amino-acid sequence, 853 residues long: Aminotransferase PigE (853 aa).

Glycine 503–threonine 504 is a pyridoxal 5'-phosphate binding site. N6-(pyridoxal phosphate)lysine is present on lysine 645. Threonine 680 contributes to the pyridoxal 5'-phosphate binding site.

It belongs to the class-III pyridoxal-phosphate-dependent aminotransferase family. Homodimer. Pyridoxal 5'-phosphate is required as a cofactor.

It participates in antibiotic biosynthesis; prodigiosin biosynthesis. Its function is as follows. Involved in the biosynthesis of 2-methyl-3-n-amyl-pyrrole (MAP), one of the terminal products involved in the biosynthesis of the red antibiotic prodigiosin (Pig). Catalyzes the transamination to the aldehyde group of 3-acetyloctanal, resulting in an aminoketone, which spontaneously cyclizes to yield the dihydro form of MAP (H2MAP). The chain is Aminotransferase PigE from Serratia sp. (strain FS14).